A 392-amino-acid polypeptide reads, in one-letter code: Bifunctional enzyme Fae/Hps (392 aa).

A formaldehyde-activating enzyme region spans residues 1-161 (MFLVGEALIG…YEKERSVHPV (161 aa)). His-17 (proton donor) is an active-site residue. 5 residues coordinate substrate: Asp-19, Leu-48, Lys-66, Thr-68, and Gln-83. The tract at residues 162–392 (MGYRVMRLWD…IDQYRIMTDF (231 aa)) is 3-hexulose-6-phosphate synthase.

This sequence in the N-terminal section; belongs to the formaldehyde-activating enzyme family. In the C-terminal section; belongs to the HPS/KGPDC family. HPS subfamily.

The catalysed reaction is 5,6,7,8-tetrahydromethanopterin + formaldehyde = 5,10-methylenetetrahydromethanopterin + H2O. The enzyme catalyses D-ribulose 5-phosphate + formaldehyde = D-arabino-hex-3-ulose 6-phosphate. Its pathway is carbohydrate biosynthesis; D-ribose 5-phosphate biosynthesis. Its function is as follows. Catalyzes the condensation of formaldehyde with tetrahydromethanopterin (H(4)MPT) to 5,10-methylenetetrahydromethanopterin. In terms of biological role, catalyzes the reversible formation of ribulose-5-phosphate and formaldehyde from 3-hexulose-6-phosphate. The protein is Bifunctional enzyme Fae/Hps of Methanothrix thermoacetophila (strain DSM 6194 / JCM 14653 / NBRC 101360 / PT) (Methanosaeta thermophila).